The chain runs to 143 residues: Large ribosomal subunit protein uL11 (143 aa).

The protein belongs to the universal ribosomal protein uL11 family. In terms of assembly, part of the ribosomal stalk of the 50S ribosomal subunit. Interacts with L10 and the large rRNA to form the base of the stalk. L10 forms an elongated spine to which L12 dimers bind in a sequential fashion forming a multimeric L10(L12)X complex. Post-translationally, one or more lysine residues are methylated.

In terms of biological role, forms part of the ribosomal stalk which helps the ribosome interact with GTP-bound translation factors. This is Large ribosomal subunit protein uL11 from Nitrosomonas europaea (strain ATCC 19718 / CIP 103999 / KCTC 2705 / NBRC 14298).